The primary structure comprises 257 residues: tRNA (guanine-N(1)-)-methyltransferase (257 aa).

S-adenosyl-L-methionine-binding positions include glycine 117 and 137 to 142 (LGDFVL).

It belongs to the RNA methyltransferase TrmD family. As to quaternary structure, homodimer.

The protein localises to the cytoplasm. The catalysed reaction is guanosine(37) in tRNA + S-adenosyl-L-methionine = N(1)-methylguanosine(37) in tRNA + S-adenosyl-L-homocysteine + H(+). Its function is as follows. Specifically methylates guanosine-37 in various tRNAs. This is tRNA (guanine-N(1)-)-methyltransferase from Bordetella parapertussis (strain 12822 / ATCC BAA-587 / NCTC 13253).